An 89-amino-acid polypeptide reads, in one-letter code: Repressor protein (89 aa).

Residues 29 to 52 constitute a DNA-binding region (H-T-H motif); that stretch reads SGDIARNTGYSRRRISDRCTVLVD.

Functionally, transcriptional repressor expressed under lysogenic conditions, which specifically binds the host DNA site 'RRGAAG'. The binding occurs cooperatively, probably as 2 copies of a dimer. Possibly prevents RNA polymerase access to the promoters for lytic cell cycle transcription. In Halobacterium salinarum (Halobacterium halobium), this protein is Repressor protein (T6).